The following is a 228-amino-acid chain: HTH-type transcriptional regulator TfdT (228 aa).

The region spanning 1–58 is the HTH lysR-type domain; it reads MEIRQLKYFVAVAEAGGFGTAAQRMHISQPPLTRQIQALERDIGAKLFERTARGVELT. Residues 18 to 37 constitute a DNA-binding region (H-T-H motif); sequence FGTAAQRMHISQPPLTRQIQ.

The protein belongs to the LysR transcriptional regulatory family.

Its subcellular location is the cytoplasm. Its function is as follows. Does not seem to be involved in the regulation of 3-chlorocatechol degradation. Does not activate the expression of its presumed target operon, tfdCDEF. The protein is HTH-type transcriptional regulator TfdT (tfdT) of Cupriavidus pinatubonensis (strain JMP 134 / LMG 1197) (Cupriavidus necator (strain JMP 134)).